A 336-amino-acid polypeptide reads, in one-letter code: uncharacterized protein (336 aa).

29–36 (GPKSSGKS) is a binding site for ATP.

It belongs to the archaeal ATPase family.

This is an uncharacterized protein from Methanocaldococcus jannaschii (strain ATCC 43067 / DSM 2661 / JAL-1 / JCM 10045 / NBRC 100440) (Methanococcus jannaschii).